The primary structure comprises 387 residues: Probable NADH-dependent butanol dehydrogenase 1 (387 aa).

This sequence belongs to the iron-containing alcohol dehydrogenase family.

The protein operates within alcohol metabolism; butanol biosynthesis. The chain is Probable NADH-dependent butanol dehydrogenase 1 (yugJ) from Bacillus subtilis (strain 168).